The following is a 796-amino-acid chain: Vacuolar protein sorting-associated protein 35 (796 aa).

S7 is modified (phosphoserine). Interaction with SNX3 regions lie at residues 25–44 (VQSFQMKRCLDKNKLMDALK) and 205–215 (DREKRERERQE). Residues 438–796 (CYVLSNVLDY…EGPIYEGLIL (359 aa)) are interaction with SLC11A2. Residues 500–693 (SDDPDQQYLI…DKNGEELHGG (194 aa)) are interaction with IGF2R cytoplasmic domain. Residues 776–796 (HLRSRRESPESEGPIYEGLIL) form a disordered region. A Phosphoserine modification is found at S783. Y791 is modified (phosphotyrosine).

This sequence belongs to the VPS35 family. In terms of assembly, component of the heterotrimeric retromer cargo-selective complex (CSC), also described as vacuolar protein sorting subcomplex (VPS) formed by VPS26 (VPS26A or VPS26B), VPS29 and VPS35. The CSC has a highly elongated structure with VPS26 and VPS29 binding independently at opposite distal ends of VPS35 as central platform. The CSC is believed to associate with variable sorting nexins to form functionally distinct retromer complex variants. The originally described retromer complex (also called SNX-BAR retromer) is a pentamer containing the CSC and a heterodimeric membrane-deforming subcomplex formed between SNX1 or SNX2 and SNX5 or SNX6 (also called SNX-BAR subcomplex); the affinity between the respective CSC and SNX-BAR subcomplexes is low. The CSC associates with SNX3 to form a SNX3-retromer complex. The CSC associates with SNX27, the WASH complex and the SNX-BAR subcomplex to form the SNX27-retromer complex. Interacts with VPS26A, VPS29, VPS26B and LRRK2. Interacts with SNX1, SNX2, IGF2R, SNX3, GOLPH3, SLC11A2, WASHC2, FKBP15, WASHC1, EHD1. Interacts with MAGEL2; leading to recruitment of the TRIM27:MAGEL2 E3 ubiquitin ligase complex retromer-containing endosomes. Interacts with SORCS2. Detected in striatum (at protein level). Ubiquitous. Highly expressed in fat tissue, testis, brain, kidney, thymus, liver and pancreas, and at lower levels in heart, intestine and skeletal muscle. Detected in oocytes, pre-implantation embryos and at 6.5-12.5 dpc.

Its subcellular location is the cytoplasm. It is found in the membrane. It localises to the endosome. The protein resides in the early endosome. The protein localises to the late endosome. Functionally, acts as a component of the retromer cargo-selective complex (CSC). The CSC is believed to be the core functional component of retromer or respective retromer complex variants acting to prevent missorting of selected transmembrane cargo proteins into the lysosomal degradation pathway. The recruitment of the CSC to the endosomal membrane involves RAB7A and SNX3. The CSC seems to associate with the cytoplasmic domain of cargo proteins predominantly via VPS35; however, these interactions seem to be of low affinity and retromer SNX proteins may also contribute to cargo selectivity thus questioning the classical function of the CSC. The SNX-BAR retromer mediates retrograde transport of cargo proteins from endosomes to the trans-Golgi network (TGN) and is involved in endosome-to-plasma membrane transport for cargo protein recycling. The SNX3-retromer mediates the retrograde transport of WLS distinct from the SNX-BAR retromer pathway. The SNX27-retromer is believed to be involved in endosome-to-plasma membrane trafficking and recycling of a broad spectrum of cargo proteins. The CSC seems to act as recruitment hub for other proteins, such as the WASH complex and TBC1D5. Required for retrograde transport of lysosomal enzyme receptor IGF2R and SLC11A2. Required to regulate transcytosis of the polymeric immunoglobulin receptor (pIgR-pIgA). Required for endosomal localization of WASHC2 and mediates the association of the CSC with the WASH complex. The polypeptide is Vacuolar protein sorting-associated protein 35 (Vps35) (Mus musculus (Mouse)).